The following is a 723-amino-acid chain: Probable dipeptidyl-peptidase 5 (723 aa).

The first 19 residues, 1 to 19 (MAALRWLSAVVAVSTTVLA), serve as a signal peptide directing secretion. N-linked (GlcNAc...) asparagine glycosylation is found at Asn79, Asn97, Asn154, Asn255, Asn381, and Asn451. The Charge relay system role is filled by Ser561. The N-linked (GlcNAc...) asparagine glycan is linked to Asn608. Catalysis depends on charge relay system residues Asp644 and His676.

This sequence belongs to the peptidase S9C family.

The protein resides in the secreted. In terms of biological role, extracellular dipeptidyl-peptidase which removes N-terminal dipeptides sequentially from polypeptides having unsubstituted N-termini. The polypeptide is Probable dipeptidyl-peptidase 5 (dpp5) (Aspergillus terreus (strain NIH 2624 / FGSC A1156)).